The primary structure comprises 424 residues: 3-phosphoshikimate 1-carboxyvinyltransferase (424 aa).

3 residues coordinate 3-phosphoshikimate: K20, S21, and R25. K20 lines the phosphoenolpyruvate pocket. The phosphoenolpyruvate site is built by G92 and R120. 3-phosphoshikimate contacts are provided by S165, Q167, D313, and K340. Q167 contributes to the phosphoenolpyruvate binding site. D313 (proton acceptor) is an active-site residue. Phosphoenolpyruvate is bound by residues R344 and R386.

It belongs to the EPSP synthase family. As to quaternary structure, monomer.

The protein resides in the cytoplasm. The catalysed reaction is 3-phosphoshikimate + phosphoenolpyruvate = 5-O-(1-carboxyvinyl)-3-phosphoshikimate + phosphate. Its pathway is metabolic intermediate biosynthesis; chorismate biosynthesis; chorismate from D-erythrose 4-phosphate and phosphoenolpyruvate: step 6/7. Catalyzes the transfer of the enolpyruvyl moiety of phosphoenolpyruvate (PEP) to the 5-hydroxyl of shikimate-3-phosphate (S3P) to produce enolpyruvyl shikimate-3-phosphate and inorganic phosphate. The chain is 3-phosphoshikimate 1-carboxyvinyltransferase from Bacillus cytotoxicus (strain DSM 22905 / CIP 110041 / 391-98 / NVH 391-98).